The chain runs to 501 residues: Probable cytochrome P450 6a20 (501 aa).

Cysteine 445 is a binding site for heme.

This sequence belongs to the cytochrome P450 family. Heme serves as cofactor.

It localises to the endoplasmic reticulum membrane. The protein localises to the microsome membrane. May be involved in the metabolism of insect hormones and in the breakdown of synthetic insecticides. This Drosophila melanogaster (Fruit fly) protein is Probable cytochrome P450 6a20 (Cyp6a20).